A 434-amino-acid chain; its full sequence is Prenyltransferase fogH (434 aa).

Glu-86 serves as a coordination point for L-tryptophan. Residues Arg-101, Arg-248, Lys-250, Tyr-252, and Tyr-346 each coordinate substrate.

This sequence belongs to the tryptophan dimethylallyltransferase family.

The protein operates within secondary metabolite biosynthesis. Functionally, prenyltransferase; part of the gene cluster that mediates the biosynthesis of flavoglaucin and congeners (including aspergin, dihydroauroglaucin and auroglaucin), prenylated salicylaldehyde derivatives carrying a saturated or an unsaturated C-7 side chain. The PKS fogA releases the carboxylic acid (8E,10E,12E)-3,5,7-trihydroxytetradeca-8,10,12-trienoic acid as its product, as well as derivatives with one and two double bonds. FogA is indeed able to reduce the initial triketide, thus being at least partially responsible for the differently saturated heptyl side chains of flavoglaucin congeners. The oxidoreductases fogB, fogC and fogD modify the nascent polyketide in fogA-bound form and, together, fogA, fogB, fogC and fogD are necessary for the formation of the aromatic core and the cyclized PKS products are released as salicyl alcohols. In particular, fogB is responsible for oxidation of a hydroxyl group or reduction of remaining double bond(s) at the C-7 residue whereas fogD is probably involved in the reductive release of the modified PKS products. The cytochrome P450 monooxygenase fogE is then responsible for the hydroxylation at C-3 of the benzene ring. The fogE products are substrates of the prenyltransferase fogH and the prenylated benzyl alcohols are subsequently oxidized by the fogF to produce the final aryl aldehydes flavoglaucin and congeners. The short-chain dehydrogenase fogG does not seem to be involved in the biosynthesis of the prenylated salicylaldehyde derivatives. This is Prenyltransferase fogH from Aspergillus ruber (strain CBS 135680).